Reading from the N-terminus, the 78-residue chain is Large ribosomal subunit protein bL28 (78 aa).

Residues 1 to 20 (MSRVCQVTGKRPVTGNNRSH) form a disordered region.

The protein belongs to the bacterial ribosomal protein bL28 family.

This chain is Large ribosomal subunit protein bL28, found in Vibrio parahaemolyticus serotype O3:K6 (strain RIMD 2210633).